The sequence spans 403 residues: Na(+)-translocating NADH-quinone reductase subunit B (403 aa).

9 helical membrane passes run 56–76 (MMII…YNVG), 121–141 (AYFL…EVLF), 164–184 (LPPS…VVLG), 225–245 (GFAG…NILG), 260–280 (GSMG…LLLT), 287–307 (IVAG…AIGS), 312–332 (MFAM…GMIF), 348–368 (WLFG…NPAF), and 371–391 (GMML…HFVV). T230 is subject to FMN phosphoryl threonine.

Belongs to the NqrB/RnfD family. Composed of six subunits; NqrA, NqrB, NqrC, NqrD, NqrE and NqrF. FMN is required as a cofactor.

The protein resides in the cell inner membrane. The enzyme catalyses a ubiquinone + n Na(+)(in) + NADH + H(+) = a ubiquinol + n Na(+)(out) + NAD(+). Functionally, NQR complex catalyzes the reduction of ubiquinone-1 to ubiquinol by two successive reactions, coupled with the transport of Na(+) ions from the cytoplasm to the periplasm. NqrA to NqrE are probably involved in the second step, the conversion of ubisemiquinone to ubiquinol. The polypeptide is Na(+)-translocating NADH-quinone reductase subunit B (Pseudomonas paraeruginosa (strain DSM 24068 / PA7) (Pseudomonas aeruginosa (strain PA7))).